Here is a 1072-residue protein sequence, read N- to C-terminus: Translation initiation factor IF-2 (1072 aa).

2 disordered regions span residues 55 to 369 (ILDK…TGTA) and 426 to 452 (ELVDVSKNKERGQRKRTSGDTQSVSKQ). Composition is skewed to low complexity over residues 91–100 (AEASQAAEPA), 108–118 (EPATFAAEEPV), 126–179 (APRA…AEVA), and 186–212 (EAPQAPVEAPRAAVPAPAAAQPRPSVQ). The span at 218–230 (PQPPPRSPVPPAV) shows a compositional bias: pro residues. Low complexity predominate over residues 231–245 (RTPSSTSSSATVVSR). Over residues 253 to 307 (QRGGPGGGRPGGPGGPGGRPGGPGGPGGRPGGPGGPGGRPGGPGGPGGRPGGPGG) the composition is skewed to gly residues. Residues 426–436 (ELVDVSKNKER) are compositionally biased toward basic and acidic residues. The 168-residue stretch at 570–737 (PRPPVVAIMG…NLALQAEVLE (168 aa)) folds into the tr-type G domain. Positions 579–586 (GHVDHGKT) are G1. A GTP-binding site is contributed by 579-586 (GHVDHGKT). Positions 604 to 608 (GITQH) are G2. The G3 stretch occupies residues 625-628 (DTPG). GTP-binding positions include 625-629 (DTPGH) and 679-682 (NKMD). The interval 679–682 (NKMD) is G4. The segment at 715–717 (SAK) is G5.

This sequence belongs to the TRAFAC class translation factor GTPase superfamily. Classic translation factor GTPase family. IF-2 subfamily.

It is found in the cytoplasm. One of the essential components for the initiation of protein synthesis. Protects formylmethionyl-tRNA from spontaneous hydrolysis and promotes its binding to the 30S ribosomal subunits. Also involved in the hydrolysis of GTP during the formation of the 70S ribosomal complex. This Myxococcus xanthus (strain DK1622) protein is Translation initiation factor IF-2.